We begin with the raw amino-acid sequence, 464 residues long: Splicing factor 3A subunit 2 (464 aa).

Residue M1 is modified to N-acetylmethionine. Residues 1–27 (MDFQHRPGGKTGSGGVASSSESNRDRR) form a disordered region. K10 carries the post-translational modification N6-acetyllysine. Residues 54-84 (YECKLCLTLHNNEGSYLAHTQGKKHQTNLAR) form a Matrin-type zinc finger. S153 carries the phosphoserine modification. 3 stretches are compositionally biased toward pro residues: residues 217–295 (PPAP…PVVH), 303–323 (PPAP…PGVH), and 331–369 (PPAP…PPPS). Residues 217-464 (PPAPPSLPAG…GNIPPPPPTN (248 aa)) form a disordered region. Residues 370–392 (AGVHPQAPGVHPAAPAVHPQAPG) are compositionally biased toward low complexity. Positions 435–464 (VHPPTPMPPMLRPPLPSEGPGNIPPPPPTN) are enriched in pro residues.

It belongs to the SF3A2 family. In terms of assembly, component of the 17S U2 SnRNP complex, a ribonucleoprotein complex that contains small nuclear RNA (snRNA) U2 and a number of specific proteins. Part of the SF3A subcomplex of the 17S U2 SnRNP complex which is composed of three subunits; SF3A3/SAP61, SF3A2/SAP62 and SF3A1/SAP114. SF3A associates with the splicing factor SF3B and a 12S RNA unit to form the mature 17S U2 small nuclear ribonucleoprotein complex (17S U2 snRNP). Identified in the spliceosome 'E' complex, a precursor of the spliceosome 'A' complex. Identified in the spliceosome 'A' and 'B' complexes. Identified in the spliceosome 'C' complex. Interacts with HTATSF1.

Its subcellular location is the nucleus. Its function is as follows. Component of the 17S U2 SnRNP complex of the spliceosome, a large ribonucleoprotein complex that removes introns from transcribed pre-mRNAs. The 17S U2 SnRNP complex (1) directly participates in early spliceosome assembly and (2) mediates recognition of the intron branch site during pre-mRNA splicing by promoting the selection of the pre-mRNA branch-site adenosine, the nucleophile for the first step of splicing. Within the 17S U2 SnRNP complex, SF3A2 is part of the SF3A subcomplex that contributes to the assembly of the 17S U2 snRNP, and the subsequent assembly of the pre-spliceosome 'E' complex and the pre-catalytic spliceosome 'A' complex. Involved in pre-mRNA splicing as a component of pre-catalytic spliceosome 'B' complexes, including the Bact complex. Interacts directly with the duplex formed by U2 snRNA and the intron. This is Splicing factor 3A subunit 2 (SF3A2) from Homo sapiens (Human).